Here is a 285-residue protein sequence, read N- to C-terminus: Large ribosomal subunit protein uL2 (285 aa).

The disordered stretch occupies residues 215–285 (GRSRHKGIRP…IIRNRKGEQY (71 aa)). Positions 256–272 (WGKRHMGVKTRNMKKHS) are enriched in basic residues.

This sequence belongs to the universal ribosomal protein uL2 family. In terms of assembly, part of the 50S ribosomal subunit. Forms a bridge to the 30S subunit in the 70S ribosome.

Its function is as follows. One of the primary rRNA binding proteins. Required for association of the 30S and 50S subunits to form the 70S ribosome, for tRNA binding and peptide bond formation. It has been suggested to have peptidyltransferase activity; this is somewhat controversial. Makes several contacts with the 16S rRNA in the 70S ribosome. This is Large ribosomal subunit protein uL2 from Mycoplasma genitalium (strain ATCC 33530 / DSM 19775 / NCTC 10195 / G37) (Mycoplasmoides genitalium).